Consider the following 475-residue polypeptide: RNA pseudouridine synthase 3, mitochondrial (475 aa).

The transit peptide at 1–15 (MLCRRRRVGAAVRWL) directs the protein to the mitochondrion. The segment at 40–74 (RLGKPKPGPRPRQLLSLPPFPGGGDGDPLPGRKAA) is disordered. The region spanning 90–160 (ADVPQEVVQA…GEIKKRYETI (71 aa)) is the S4 RNA-binding domain. The active site involves aspartate 230.

It belongs to the pseudouridine synthase RluA family.

The protein localises to the mitochondrion. It carries out the reaction a uridine in RNA = a pseudouridine in RNA. This Oryza sativa subsp. japonica (Rice) protein is RNA pseudouridine synthase 3, mitochondrial.